Here is a 301-residue protein sequence, read N- to C-terminus: Sulfate adenylyltransferase subunit 2 1 (301 aa).

This sequence belongs to the PAPS reductase family. CysD subfamily. As to quaternary structure, heterodimer composed of CysD, the smaller subunit, and CysN.

It carries out the reaction sulfate + ATP + H(+) = adenosine 5'-phosphosulfate + diphosphate. It participates in sulfur metabolism; hydrogen sulfide biosynthesis; sulfite from sulfate: step 1/3. In terms of biological role, with CysN forms the ATP sulfurylase (ATPS) that catalyzes the adenylation of sulfate producing adenosine 5'-phosphosulfate (APS) and diphosphate, the first enzymatic step in sulfur assimilation pathway. APS synthesis involves the formation of a high-energy phosphoric-sulfuric acid anhydride bond driven by GTP hydrolysis by CysN coupled to ATP hydrolysis by CysD. The sequence is that of Sulfate adenylyltransferase subunit 2 1 from Shewanella sediminis (strain HAW-EB3).